The primary structure comprises 365 residues: MIKFNSTNKTYWLPIYIMNDTSFQSGMYLYLLLTEILLYVGTGVIICKTVRTFLKIRLFHRNMNIMTALFLCQWFEAIAAKLLIIPYQIGVIRFSDYNKPYVSWWTDNEQEIIVLPEPTANSNALVISGFLIWHYAYTMIFGILNLGIERIFATVMLKDYENKPRLYIPVFLITSTHLITLTFSYFVLTNRTGFYLGTSPCFLNSALVVMTFLAVWKVNKHRHEKLEGSGPGCDYTLSQQFQVRENYRALKLAKNLVIVVLCAISVPCALLICLVIGAIPSFRMIFIHIMENFIYLNPVIICSTLMFSAPAWRAEYLKLIPGYKKIKSTRVFVVRPKPQTTHRASSTVVHDEGQMYFEQLNNSWK.

7 consecutive transmembrane segments (helical) span residues 26–46 (GMYL…GVII), 65–85 (IMTA…LLII), 124–144 (ALVI…FGIL), 168–188 (IPVF…YFVL), 196–216 (LGTS…LAVW), 256–276 (LVIV…CLVI), and 285–305 (IFIH…CSTL).

This sequence belongs to the nematode receptor-like protein sre family.

It is found in the membrane. In Caenorhabditis elegans, this protein is Serpentine receptor class epsilon-38 (sre-38).